Consider the following 402-residue polypeptide: Beta sliding clamp (402 aa).

It belongs to the beta sliding clamp family. Forms a ring-shaped head-to-tail homodimer around DNA which binds and tethers DNA polymerases and other proteins to the DNA. The DNA replisome complex has a single clamp-loading complex (3 tau and 1 each of delta, delta', psi and chi subunits) which binds 3 Pol III cores (1 core on the leading strand and 2 on the lagging strand) each with a beta sliding clamp dimer. Additional proteins in the replisome are other copies of gamma, psi and chi, Ssb, DNA helicase and RNA primase.

It localises to the cytoplasm. Its function is as follows. Confers DNA tethering and processivity to DNA polymerases and other proteins. Acts as a clamp, forming a ring around DNA (a reaction catalyzed by the clamp-loading complex) which diffuses in an ATP-independent manner freely and bidirectionally along dsDNA. Initially characterized for its ability to contact the catalytic subunit of DNA polymerase III (Pol III), a complex, multichain enzyme responsible for most of the replicative synthesis in bacteria; Pol III exhibits 3'-5' exonuclease proofreading activity. The beta chain is required for initiation of replication as well as for processivity of DNA replication. This Mycobacterium tuberculosis (strain CDC 1551 / Oshkosh) protein is Beta sliding clamp (dnaN).